The primary structure comprises 250 residues: Orotidine 5'-phosphate decarboxylase (250 aa).

Substrate contacts are provided by residues aspartate 9, lysine 40, 67–76, threonine 132, arginine 190, glutamine 204, glycine 224, and arginine 225; that span reads DLKFHDIPNT. The Proton donor role is filled by lysine 69.

This sequence belongs to the OMP decarboxylase family. Type 1 subfamily. As to quaternary structure, homodimer.

It catalyses the reaction orotidine 5'-phosphate + H(+) = UMP + CO2. It functions in the pathway pyrimidine metabolism; UMP biosynthesis via de novo pathway; UMP from orotate: step 2/2. Its function is as follows. Catalyzes the decarboxylation of orotidine 5'-monophosphate (OMP) to uridine 5'-monophosphate (UMP). This is Orotidine 5'-phosphate decarboxylase from Nitratidesulfovibrio vulgaris (strain DSM 19637 / Miyazaki F) (Desulfovibrio vulgaris).